Reading from the N-terminus, the 540-residue chain is Kinesin light chain (540 aa).

Residues 34 to 138 (LETSVKGVKE…NKHLKYMASI (105 aa)) are a coiled coil. 6 TPR repeats span residues 206-239 (LRTL…LEKT), 248-281 (ATML…REKC), 290-323 (AATL…REKV), 332-365 (AKQL…YESK), 374-407 (AKTK…AHER), and 456-489 (TTTL…KKQH).

Belongs to the kinesin light chain family. Oligomeric complex composed of two heavy chains and two light chains. Interacts with unc-83; the interaction is direct. Interacts with unc-33; the interaction regulates unc-33 neurite localization. Interacts with casy-1.

The protein localises to the cytoplasm. Its subcellular location is the cytoskeleton. It is found in the nucleus envelope. Its function is as follows. Kinesin is a microtubule-associated force-producing protein that may play a role in organelle transport. The light chain may function in coupling of cargo to the heavy chain or in the modulation of its ATPase activity. Recruits unc-83 (within the unc-83-unc-84 LINC complex) to the nuclear envelope during nuclear migration to mediate the link between the nuclear envelope and the microtubule cytoskeleton in hypodermal precursor cells. This is Kinesin light chain from Caenorhabditis elegans.